The sequence spans 431 residues: 3-phosphoshikimate 1-carboxyvinyltransferase (431 aa).

3-phosphoshikimate contacts are provided by Lys21, Ser22, and Arg26. Lys21 is a binding site for phosphoenolpyruvate. Gly93 and Arg121 together coordinate phosphoenolpyruvate. 3-phosphoshikimate is bound by residues Ser166, Gln168, Asp318, and Lys345. Gln168 lines the phosphoenolpyruvate pocket. Catalysis depends on Asp318, which acts as the Proton acceptor. Residues Arg349 and Arg391 each coordinate phosphoenolpyruvate.

Belongs to the EPSP synthase family. In terms of assembly, monomer.

It localises to the cytoplasm. It carries out the reaction 3-phosphoshikimate + phosphoenolpyruvate = 5-O-(1-carboxyvinyl)-3-phosphoshikimate + phosphate. Its pathway is metabolic intermediate biosynthesis; chorismate biosynthesis; chorismate from D-erythrose 4-phosphate and phosphoenolpyruvate: step 6/7. Functionally, catalyzes the transfer of the enolpyruvyl moiety of phosphoenolpyruvate (PEP) to the 5-hydroxyl of shikimate-3-phosphate (S3P) to produce enolpyruvyl shikimate-3-phosphate and inorganic phosphate. The polypeptide is 3-phosphoshikimate 1-carboxyvinyltransferase (Sulfurihydrogenibium sp. (strain YO3AOP1)).